We begin with the raw amino-acid sequence, 298 residues long: Mitochondrial basic amino acids transporter (298 aa).

The next 6 membrane-spanning stretches (helical) occupy residues 2–22 (ALDF…GHPF), 61–81 (GLGS…GVQG), 96–116 (FLAG…MELA), 153–172 (GMVS…FLTY), 187–207 (LLVP…WLST), and 255–275 (LLRA…VLSY). 3 Solcar repeats span residues 2-86 (ALDF…TLRA), 90-178 (DSPL…LTRA), and 185-275 (DRLL…VLSY).

It belongs to the mitochondrial carrier (TC 2.A.29) family.

The protein resides in the mitochondrion inner membrane. It catalyses the reaction L-lysine(out) + L-arginine(in) = L-lysine(in) + L-arginine(out). It carries out the reaction L-histidine(out) + L-arginine(in) = L-histidine(in) + L-arginine(out). The enzyme catalyses L-ornithine(in) + L-arginine(out) = L-ornithine(out) + L-arginine(in). The catalysed reaction is L-homoarginine(in) + L-arginine(out) = L-homoarginine(out) + L-arginine(in). It catalyses the reaction N(omega)-methyl-L-arginine(in) + L-arginine(out) = N(omega)-methyl-L-arginine(out) + L-arginine(in). It carries out the reaction L-arginine(in) = L-arginine(out). The enzyme catalyses L-lysine(in) = L-lysine(out). The catalysed reaction is L-ornithine(in) = L-ornithine(out). It catalyses the reaction L-histidine(out) = L-histidine(in). Functionally, mitochondrial transporter of arginine, lysine, homoarginine, methylarginine and, to a much lesser extent, ornithine and histidine. Does not transport carnitine nor acylcarnitines. Functions by both counter-exchange and uniport mechanisms. Plays a physiological role in the import of basic amino acids into mitochondria for mitochondrial protein synthesis and amino acid degradation. This Bos taurus (Bovine) protein is Mitochondrial basic amino acids transporter (SLC25A29).